Reading from the N-terminus, the 80-residue chain is UPF0180 protein BPUM_1317 (80 aa).

It belongs to the UPF0180 family.

The polypeptide is UPF0180 protein BPUM_1317 (Bacillus pumilus (strain SAFR-032)).